The primary structure comprises 413 residues: Divalent metal cation transporter MntH (413 aa).

The next 11 membrane-spanning stretches (helical) occupy residues 19-39, 46-66, 94-114, 122-142, 156-176, 196-216, 241-261, 290-310, 329-349, 350-370, and 392-412; these read LALM…GNFA, ASFG…AMLI, VWFY…AEFI, LVLG…TFLI, VIGG…IFSQ, AVFL…IYLH, IAMT…AAAF, IFGL…TLAG, AVTM…TRIL, VMSQ…LLIF, and VIVA…LLGV.

The protein belongs to the NRAMP family.

Its subcellular location is the cell inner membrane. Its function is as follows. H(+)-stimulated, divalent metal cation uptake system. The chain is Divalent metal cation transporter MntH from Klebsiella pneumoniae (strain 342).